Reading from the N-terminus, the 184-residue chain is Probable chemoreceptor glutamine deamidase CheD (184 aa).

It belongs to the CheD family.

The enzyme catalyses L-glutaminyl-[protein] + H2O = L-glutamyl-[protein] + NH4(+). Functionally, probably deamidates glutamine residues to glutamate on methyl-accepting chemotaxis receptors (MCPs), playing an important role in chemotaxis. In Rhizobium etli (strain CIAT 652), this protein is Probable chemoreceptor glutamine deamidase CheD.